Here is a 591-residue protein sequence, read N- to C-terminus: Aspartate--tRNA(Asp/Asn) ligase (591 aa).

Glutamate 174 lines the L-aspartate pocket. The tract at residues 198–201 is aspartate; the sequence is QLFK. Arginine 220 lines the L-aspartate pocket. ATP-binding positions include 220 to 222 and glutamine 229; that span reads RDE. Histidine 450 contacts L-aspartate. Glutamate 483 contacts ATP. Position 490 (arginine 490) interacts with L-aspartate. 535 to 538 is a binding site for ATP; that stretch reads GLDR.

The protein belongs to the class-II aminoacyl-tRNA synthetase family. Type 1 subfamily. Homodimer.

The protein localises to the cytoplasm. It catalyses the reaction tRNA(Asx) + L-aspartate + ATP = L-aspartyl-tRNA(Asx) + AMP + diphosphate. In terms of biological role, aspartyl-tRNA synthetase with relaxed tRNA specificity since it is able to aspartylate not only its cognate tRNA(Asp) but also tRNA(Asn). Reaction proceeds in two steps: L-aspartate is first activated by ATP to form Asp-AMP and then transferred to the acceptor end of tRNA(Asp/Asn). The chain is Aspartate--tRNA(Asp/Asn) ligase from Pseudomonas putida (strain GB-1).